The chain runs to 302 residues: MPINIPKDLPAKEILEQENIFVMDEERAYSQDIRPLNIIILNLMPEKEKAETQLLRLLGNSPLQVNVTFLRPATHEPKTTSKHHLEQFYTIFPHIRHRKFDGMIITGAPVEQLPFEEVTYWDELTDIMEWTKTNVTSTLHICWGAQAGLYYHYGIPKYPLPEKCFGVFNHTVEAKNVKLLRGFDDVFRMPHSRHTDVKREDIEKVPDLTILSMSDKAGVCLVASNDGRRIFLTGHPEYDATTLKEEYERDLAKGLPIHIPESYFPNDDPSQPPLNTWRSHANLLFVNWLNYYVYQETPYEWE.

Cysteine 142 acts as the Acyl-thioester intermediate in catalysis. Positions 163 and 192 each coordinate substrate. Catalysis depends on histidine 235, which acts as the Proton acceptor. Glutamate 237 is an active-site residue. Arginine 249 contacts substrate.

This sequence belongs to the MetA family.

Its subcellular location is the cytoplasm. The enzyme catalyses L-homoserine + acetyl-CoA = O-acetyl-L-homoserine + CoA. It functions in the pathway amino-acid biosynthesis; L-methionine biosynthesis via de novo pathway; O-acetyl-L-homoserine from L-homoserine: step 1/1. Its function is as follows. Transfers an acetyl group from acetyl-CoA to L-homoserine, forming acetyl-L-homoserine. This Geobacillus kaustophilus protein is Homoserine O-acetyltransferase.